We begin with the raw amino-acid sequence, 292 residues long: Undecaprenyl-diphosphatase (292 aa).

The next 7 helical transmembrane spans lie at 1 to 21 (MSLVSAALFGLLQALTEFLPV), 46 to 66 (FVTIIQAGTTLAVLVYFRADI), 90 to 110 (LGWYIVLGTVPAALAGKLLEH), 114 to 134 (ALGNWVIAGSLVALGLVLLAA), 192 to 212 (FLLSVPITLAAGAYKLWSTVP), 225 to 245 (VVGTVVSAVAGYLVIDWLLAW), and 253 to 273 (VFVVWRLAAGAAIAALILSGV).

This sequence belongs to the UppP family.

The protein resides in the cell inner membrane. The enzyme catalyses di-trans,octa-cis-undecaprenyl diphosphate + H2O = di-trans,octa-cis-undecaprenyl phosphate + phosphate + H(+). Its function is as follows. Catalyzes the dephosphorylation of undecaprenyl diphosphate (UPP). Confers resistance to bacitracin. This Anaeromyxobacter dehalogenans (strain 2CP-1 / ATCC BAA-258) protein is Undecaprenyl-diphosphatase.